The sequence spans 237 residues: NADH-ubiquinone oxidoreductase assembly factor N7BML (237 aa).

The segment covering Val-214–Lys-223 has biased composition (basic and acidic residues). The disordered stretch occupies residues Val-214–Gly-237.

It belongs to the complex I NDUFA12 subunit family.

The protein localises to the mitochondrion. Acts as an assembly factor of mitochondrial complex I. This chain is NADH-ubiquinone oxidoreductase assembly factor N7BML, found in Yarrowia lipolytica (strain CLIB 122 / E 150) (Yeast).